We begin with the raw amino-acid sequence, 98 residues long: Peptide YY (98 aa).

A signal peptide spans 1 to 28 (MVAVRRPWPVMVAMLLVLLACLGALVDA). Residue Ser-41 is modified to Phosphoserine. Tyr-64 is modified (tyrosine amide). Residues 68–98 (EVPAALFSKLLFTDDSENLPFRSRPEGVDQW) constitute a propeptide that is removed on maturation.

This sequence belongs to the NPY family. The peptide YY form is cleaved at Pro-30 by the prolyl endopeptidase FAP (seprase) activity (in vitro) to generate peptide YY(3-36).

It is found in the secreted. In terms of biological role, this gut peptide inhibits exocrine pancreatic secretion, has a vasoconstrictory action and inhibitis jejunal and colonic mobility. This Rattus norvegicus (Rat) protein is Peptide YY (Pyy).